The chain runs to 377 residues: Glutamate 5-kinase (377 aa).

Lysine 22 lines the ATP pocket. Positions 62, 149, and 161 each coordinate substrate. ATP is bound by residues 181–182 (TD) and 223–229 (TGGMVTK). The 79-residue stretch at 285–363 (RGAIVVDAGA…AQLKRFLGPQ (79 aa)) folds into the PUA domain.

Belongs to the glutamate 5-kinase family.

The protein localises to the cytoplasm. It carries out the reaction L-glutamate + ATP = L-glutamyl 5-phosphate + ADP. It functions in the pathway amino-acid biosynthesis; L-proline biosynthesis; L-glutamate 5-semialdehyde from L-glutamate: step 1/2. In terms of biological role, catalyzes the transfer of a phosphate group to glutamate to form L-glutamate 5-phosphate. The protein is Glutamate 5-kinase of Bifidobacterium longum subsp. infantis (strain ATCC 15697 / DSM 20088 / JCM 1222 / NCTC 11817 / S12).